We begin with the raw amino-acid sequence, 383 residues long: Probable assembly chaperone of rpl4 (383 aa).

Positions 1 to 12 (MGKPRPHKKKAS) are enriched in basic residues. The segment at 1-33 (MGKPRPHKKKASKTREKSVLSAGGSISKRKMNE) is disordered. 4 TPR repeats span residues 35 to 68 (PRKLLEQATILLQTGQADAALSIAQQALEIATSN), 73 to 106 (LSSLNTIAEIYVELGEIDLARKHFLQAVELDPTG), 116 to 147 (AEKFLWLAQLSELGGKDSVQWFEKGVGALRGI), and 193 to 226 (PEVLQTLASIRISQLREDDARAALSRSLELWKDL). The tract at residues 345–383 (NKELGEEMEDDSNVEDGEGEGEEEWEGIESDSDHEMADS) is disordered. Acidic residues predominate over residues 350–374 (EEMEDDSNVEDGEGEGEEEWEGIES).

The protein belongs to the ACL4 family.

It localises to the cytoplasm. The protein resides in the nucleus. Its function is as follows. Acts as a chaperone for the L4 ribosomal subunit, required for hierarchical ribosome assembly. Shields ribosomal protein L4 until timely release and insertion into the pre-ribosome is possible, once ribosomal protein L18 is present. The protein is Probable assembly chaperone of rpl4 of Emericella nidulans (strain FGSC A4 / ATCC 38163 / CBS 112.46 / NRRL 194 / M139) (Aspergillus nidulans).